The following is an 897-amino-acid chain: Schlafen family member 13 (897 aa).

A n'-domain region region spans residues E2 to P355. Residues E208 and E213 contribute to the active site. Residues H284, C286, and C321 each contribute to the Zn(2+) site. G599–T606 is an ATP binding site.

This sequence belongs to the Schlafen family. Subgroup III subfamily. Mg(2+) is required as a cofactor.

It is found in the cytoplasm. In terms of biological role, endoribonuclease that cleaves tRNAs and rRNAs. Cleaves tRNAs 11 nucleotides from the 3'-terminus at the acceptor stem. Does not act on tRNA(Sec). Able to restrict HIV-1 virus replication; ability to inhibit HIV-1 replication is dependent on endoribonuclease activity. The protein is Schlafen family member 13 of Homo sapiens (Human).